Consider the following 295-residue polypeptide: 3-methyl-2-oxobutanoate hydroxymethyltransferase (295 aa).

Positions 1-30 (MTSGRAMSPEETAPYGTGPARAESAPDAPA) are disordered. Residues Asp-76 and Asp-115 each coordinate Mg(2+). Residues 76–77 (DS), Asp-115, and Lys-145 each bind 3-methyl-2-oxobutanoate. Glu-147 provides a ligand contact to Mg(2+). Glu-213 serves as the catalytic Proton acceptor.

It belongs to the PanB family. Homodecamer; pentamer of dimers. Mg(2+) serves as cofactor.

The protein localises to the cytoplasm. The catalysed reaction is 3-methyl-2-oxobutanoate + (6R)-5,10-methylene-5,6,7,8-tetrahydrofolate + H2O = 2-dehydropantoate + (6S)-5,6,7,8-tetrahydrofolate. It participates in cofactor biosynthesis; (R)-pantothenate biosynthesis; (R)-pantoate from 3-methyl-2-oxobutanoate: step 1/2. Functionally, catalyzes the reversible reaction in which hydroxymethyl group from 5,10-methylenetetrahydrofolate is transferred onto alpha-ketoisovalerate to form ketopantoate. The sequence is that of 3-methyl-2-oxobutanoate hydroxymethyltransferase from Nocardioides sp. (strain ATCC BAA-499 / JS614).